Here is a 593-residue protein sequence, read N- to C-terminus: ESX-1 secretion system protein EccCb1 (593 aa).

FtsK domains lie at Arg-66–Gln-260 and Gln-350–Asp-546. Residues Gly-85–Ser-92 and Gly-377–Thr-384 each bind ATP.

As to quaternary structure, part of the ESX-1 / type VII secretion system (T7SS), which is composed of cytosolic and membrane components. The ESX-1 membrane complex is composed of EccB1, EccCa1, EccCb1, EccD1 and EccE1.

It localises to the cytoplasm. Its function is as follows. Part of the ESX-1 / type VII specialized secretion system (T7SS), which exports several proteins including EsxA and EsxB. Plays a role in DNA conjugation, in both donor and recipient strains. The protein is ESX-1 secretion system protein EccCb1 of Mycolicibacterium smegmatis (strain ATCC 700084 / mc(2)155) (Mycobacterium smegmatis).